Here is a 706-residue protein sequence, read N- to C-terminus: Zinc finger and BTB domain-containing protein 17 (706 aa).

A BTB domain is found at 1–12 (LKSLTVLAESPV). The disordered stretch occupies residues 32-194 (TAARVTQGDS…LLRSGTYSDR (163 aa)). The span at 67–78 (EPAEQPDAKEGP) shows a compositional bias: basic and acidic residues. Residues 90–106 (AAEASPAAVSPSRPQPA) show a composition bias toward low complexity. Acidic residues predominate over residues 134-148 (GKEEEGEAMVEDEEE). Positions 170–182 (SGSTDSGQENSGE) are enriched in polar residues. 13 consecutive C2H2-type zinc fingers follow at residues 205-227 (HKCE…IRIH), 233-255 (FSCR…EKTH), 261-283 (YGCE…KKRH), 289-311 (YRCD…QLVH), 317-339 (YQCD…LETH), 345-367 (HKCP…LKIH), 373-395 (LKCR…LRIH), 401-423 (YVCV…VPIH), 427-450 (KPCQ…HVRH), 457-479 (YVCE…IRHH), 485-507 (HKCT…IIIH), 513-536 (FLCD…KTVH), and 618-640 (YACD…VRIH). Positions 680-706 (PRDSPQEAPAAPLAPVPLAGEGQAPAE) are disordered. Residues 687-698 (APAAPLAPVPLA) show a composition bias toward low complexity.

The protein belongs to the krueppel C2H2-type zinc-finger protein family.

It localises to the nucleus. Its function is as follows. Transcription factor that can function as an activator or repressor depending on its binding partners, and by targeting negative regulators of cell cycle progression. Plays a critical role in early lymphocyte development, where it is essential to prevent apoptosis in lymphoid precursors, allowing them to survive in response to IL7 and undergo proper lineage commitment. Has been shown to bind to the promoters of adenovirus major late protein and cyclin D1 and activate transcription. Required for early embryonic development during gastrulation. Represses RB1 transcription. The chain is Zinc finger and BTB domain-containing protein 17 (ZBTB17) from Gallus gallus (Chicken).